A 180-amino-acid polypeptide reads, in one-letter code: ATP synthase subunit delta (180 aa).

It belongs to the ATPase delta chain family. F-type ATPases have 2 components, F(1) - the catalytic core - and F(0) - the membrane proton channel. F(1) has five subunits: alpha(3), beta(3), gamma(1), delta(1), epsilon(1). F(0) has three main subunits: a(1), b(2) and c(10-14). The alpha and beta chains form an alternating ring which encloses part of the gamma chain. F(1) is attached to F(0) by a central stalk formed by the gamma and epsilon chains, while a peripheral stalk is formed by the delta and b chains.

It localises to the cell membrane. Its function is as follows. F(1)F(0) ATP synthase produces ATP from ADP in the presence of a proton or sodium gradient. F-type ATPases consist of two structural domains, F(1) containing the extramembraneous catalytic core and F(0) containing the membrane proton channel, linked together by a central stalk and a peripheral stalk. During catalysis, ATP synthesis in the catalytic domain of F(1) is coupled via a rotary mechanism of the central stalk subunits to proton translocation. In terms of biological role, this protein is part of the stalk that links CF(0) to CF(1). It either transmits conformational changes from CF(0) to CF(1) or is implicated in proton conduction. This chain is ATP synthase subunit delta, found in Lactobacillus delbrueckii subsp. bulgaricus (strain ATCC 11842 / DSM 20081 / BCRC 10696 / JCM 1002 / NBRC 13953 / NCIMB 11778 / NCTC 12712 / WDCM 00102 / Lb 14).